A 1464-amino-acid chain; its full sequence is Bridge-like lipid transfer protein family member 3B (1464 aa).

The Chorein N-terminal domain occupies 3–94; that stretch reads GIIKKQILKH…DKVIMEMSTC (92 aa). Disordered stretches follow at residues 267 to 297 and 409 to 436; these read STEQ…TQTS and DHNV…YPLK. Polar residues predominate over residues 278-297; it reads PTQSSTVVASAQQVKTTQTS. Residues S414, S418, S774, S935, and S1009 each carry the phosphoserine modification. Disordered regions lie at residues 1066–1089, 1164–1183, and 1392–1413; these read SKEE…PKER, LQNY…EGAQ, and QRSV…QSAN. Composition is skewed to polar residues over residues 1164 to 1182 and 1394 to 1413; these read LQNY…SEGA and SVTQ…QSAN. The stretch at 1418-1456 forms a coiled coil; the sequence is SFDFTREQLMEENESLKQELAKAKMALAEAHLEKDALLH.

Monomer. Homodimer (via N-terminus). Associates with the Golgi-associated retrograde protein (GARP) complex. Interacts with GARP complex component VPS52. Interacts (via C-terminal coiled-coil domain) with STX6.

The protein localises to the cytoplasm. The protein resides in the cytosol. It localises to the early endosome. Tube-forming lipid transport protein which mediates the transfer of lipids between membranes at organelle contact sites. Required for retrograde traffic of vesicle clusters in the early endocytic pathway to the Golgi complex. This chain is Bridge-like lipid transfer protein family member 3B, found in Homo sapiens (Human).